The sequence spans 298 residues: tRNA uridine(34) hydroxylase (298 aa).

The 95-residue stretch at 123 to 217 folds into the Rhodanese domain; it reads QNPDVTLVDT…YLEEIPVAES (95 aa). C177 (cysteine persulfide intermediate) is an active-site residue.

It belongs to the TrhO family.

The enzyme catalyses uridine(34) in tRNA + AH2 + O2 = 5-hydroxyuridine(34) in tRNA + A + H2O. Its function is as follows. Catalyzes oxygen-dependent 5-hydroxyuridine (ho5U) modification at position 34 in tRNAs. This is tRNA uridine(34) hydroxylase from Picosynechococcus sp. (strain ATCC 27264 / PCC 7002 / PR-6) (Agmenellum quadruplicatum).